The following is a 472-amino-acid chain: uncharacterized protein (472 aa).

This sequence belongs to the IIV-6 198R family.

This is an uncharacterized protein from Acheta domesticus (House cricket).